We begin with the raw amino-acid sequence, 101 residues long: Large ribosomal subunit protein uL24 (101 aa).

This sequence belongs to the universal ribosomal protein uL24 family. Part of the 50S ribosomal subunit.

One of two assembly initiator proteins, it binds directly to the 5'-end of the 23S rRNA, where it nucleates assembly of the 50S subunit. Its function is as follows. One of the proteins that surrounds the polypeptide exit tunnel on the outside of the subunit. This chain is Large ribosomal subunit protein uL24, found in Streptococcus thermophilus (strain CNRZ 1066).